Here is a 403-residue protein sequence, read N- to C-terminus: Phosphopentomutase (403 aa).

Residues aspartate 13, aspartate 298, histidine 303, aspartate 339, histidine 340, and histidine 351 each contribute to the Mn(2+) site.

This sequence belongs to the phosphopentomutase family. Mn(2+) is required as a cofactor.

Its subcellular location is the cytoplasm. The enzyme catalyses 2-deoxy-alpha-D-ribose 1-phosphate = 2-deoxy-D-ribose 5-phosphate. The catalysed reaction is alpha-D-ribose 1-phosphate = D-ribose 5-phosphate. It participates in carbohydrate degradation; 2-deoxy-D-ribose 1-phosphate degradation; D-glyceraldehyde 3-phosphate and acetaldehyde from 2-deoxy-alpha-D-ribose 1-phosphate: step 1/2. Its function is as follows. Isomerase that catalyzes the conversion of deoxy-ribose 1-phosphate (dRib-1-P) and ribose 1-phosphate (Rib-1-P) to deoxy-ribose 5-phosphate (dRib-5-P) and ribose 5-phosphate (Rib-5-P), respectively. The polypeptide is Phosphopentomutase (Streptococcus pyogenes serotype M4 (strain MGAS10750)).